Consider the following 176-residue polypeptide: Probable inosine/xanthosine triphosphatase (176 aa).

A Mg(2+)-binding site is contributed by aspartate 36.

This sequence belongs to the YjjX NTPase family. As to quaternary structure, homodimer. Mg(2+) serves as cofactor. Mn(2+) is required as a cofactor.

It carries out the reaction XTP + H2O = XDP + phosphate + H(+). The enzyme catalyses ITP + H2O = IDP + phosphate + H(+). Its function is as follows. Phosphatase that hydrolyzes non-canonical purine nucleotides such as XTP and ITP to their respective diphosphate derivatives. Probably excludes non-canonical purines from DNA/RNA precursor pool, thus preventing their incorporation into DNA/RNA and avoiding chromosomal lesions. The polypeptide is Probable inosine/xanthosine triphosphatase (Saccharolobus islandicus (strain M.14.25 / Kamchatka #1) (Sulfolobus islandicus)).